The primary structure comprises 722 residues: Mesentericin-Y105 transport/processing ATP-binding protein MesD (722 aa).

One can recognise a Peptidase C39 domain in the interval 16 to 143 (QVDERDCGVA…EEWTGVSIFI (128 aa)). Residue C22 is part of the active site. 8 consecutive transmembrane segments (helical) span residues 171 to 191 (LLVI…ILGS), 210 to 230 (LGIV…LSYA), 242 to 262 (LSID…MSFF), 287 to 307 (TMLS…VLVV), 311 to 331 (TLFL…WLFM), 401 to 421 (SLLQ…LVMT), 429 to 449 (LITY…IINL), and 518 to 538 (IALV…LVNF). The ABC transmembrane type-1 domain occupies 173–455 (VINIVIAALL…IINLQTKLQQ (283 aa)). An ABC transporter domain is found at 489–722 (LVADHITYKY…GGFYASLFNH (234 aa)). 522–529 (GISGSGKS) contributes to the ATP binding site.

The protein belongs to the ABC transporter superfamily.

The protein resides in the cell membrane. Its function is as follows. Involved in the export process of the bacteriocin mesentericin-Y105. The sequence is that of Mesentericin-Y105 transport/processing ATP-binding protein MesD (mesD) from Leuconostoc mesenteroides.